The chain runs to 555 residues: GPI-anchor transamidase component PIGS (555 aa).

The Cytoplasmic segment spans residues A2–R18. 2 residues coordinate a cardiolipin: R15 and R18. Residues A19–T39 form a helical membrane-spanning segment. The Lumenal portion of the chain corresponds to E40–Q517. N-linked (GlcNAc...) asparagine glycans are attached at residues N267 and N370. A helical membrane pass occupies residues K518 to P532. Over I533–D555 the chain is Cytoplasmic.

It belongs to the PIGS family. In terms of assembly, heteropentamer. Part of the GPI-anchor transamidase complex, consisting of PIGK, PIGT, PIGS, PIGU and GAA1.

It localises to the endoplasmic reticulum membrane. It functions in the pathway glycolipid biosynthesis; glycosylphosphatidylinositol-anchor biosynthesis. Its function is as follows. Component of the glycosylphosphatidylinositol-anchor (GPI-anchor) transamidase (GPI-T) complex that catalyzes the formation of the linkage between a proprotein and a GPI-anchor and participates in GPI anchored protein biosynthesis. This Bos taurus (Bovine) protein is GPI-anchor transamidase component PIGS.